Consider the following 450-residue polypeptide: Na(+)/H(+) antiporter NhaA 2 (450 aa).

Transmembrane regions (helical) follow at residues 43 to 63 (VGGAVLLVASAVALVWANSPW), 86 to 106 (LTLGTWAADGLLAVFFLVVGL), 124 to 144 (ALPMAAAVGGMVVPALIFVAV), 155 to 175 (GWAIPTATDIAFAVAVLAVIS), 185 to 205 (FLLTLAVVDDLLAVTVIAVFY), 208 to 228 (EINLTALGLSIVPLALFALCV), 234 to 254 (SWWLLLPLGVATWVLMHESGV), 258 to 278 (VAGVLLGFTVPVLRSVAAGGP), 299 to 319 (VAVPVFAFFAAGVAIGGVSGL), 326 to 346 (PITLGIILGLVVGKPVGIFLT), 364 to 384 (WIDVFGVALLAGIGFTVSLLI), and 398 to 418 (FVKVGVLTGSLVAALIAAVLL).

It belongs to the NhaA Na(+)/H(+) (TC 2.A.33) antiporter family.

The protein resides in the cell membrane. The enzyme catalyses Na(+)(in) + 2 H(+)(out) = Na(+)(out) + 2 H(+)(in). Its function is as follows. Na(+)/H(+) antiporter that extrudes sodium in exchange for external protons. The polypeptide is Na(+)/H(+) antiporter NhaA 2 (Mycobacterium sp. (strain KMS)).